An 89-amino-acid chain; its full sequence is Small ribosomal subunit protein uS17 (89 aa).

The protein belongs to the universal ribosomal protein uS17 family. In terms of assembly, part of the 30S ribosomal subunit.

Its function is as follows. One of the primary rRNA binding proteins, it binds specifically to the 5'-end of 16S ribosomal RNA. The polypeptide is Small ribosomal subunit protein uS17 (Phytoplasma mali (strain AT)).